The following is a 339-amino-acid chain: Leucine-rich repeat-containing protein 59 (339 aa).

At 1-282 (MARGGGKSGS…KHSWSRSVLR (282 aa)) the chain is on the cytoplasmic side. LRR repeat units lie at residues 10-31 (SLKD…SEVP), 40-61 (KATV…FCSL), 63-84 (HLVK…FGRL), and 86-107 (SLQH…FAQL). A coiled-coil region spans residues 181 to 254 (MKVIQSEQDR…EMEKKTKKET (74 aa)). The tract at residues 186–275 (SEQDRERQRK…PPQPARHKHS (90 aa)) is disordered. Residues 187–256 (EQDRERQRKL…EKKTKKETVQ (70 aa)) show a composition bias toward basic and acidic residues. Residues 283–300 (ALLLVLLCILCTLAVCKL) traverse the membrane as a helical segment. At 301 to 339 (TELQHQPLCVSVNTLYEDVVAAVQNHKTLQNMLQQNSQQ) the chain is on the lumenal side.

Interacts with SGO1.

The protein resides in the microsome membrane. It localises to the endoplasmic reticulum membrane. It is found in the nucleus envelope. Required for nuclear import of FGF1. This chain is Leucine-rich repeat-containing protein 59 (LRRC59), found in Gallus gallus (Chicken).